Here is a 230-residue protein sequence, read N- to C-terminus: MAKVKEKVAVVTGASSGIGEAIAKKLSQQGASIVLVGRNEQRLNEIAQQLNTPAKVVSADVTVKSNIDDMLKAVIDHFGHIDIVVNSAGQSLSSKITDYNVEQWDTMIDVNIKGTLHVLQATLPYLLKQSSGHIINLASVSGFEPTKTNAVYGATKAAIHAITQSLEKELARTGVKVTSISPGMVDTPMTEGTDFGERKKLEAQNIADAVVYALTQPSHVNVNEVTIRPV.

10–34 (VVTGASSGIGEAIAKKLSQQGASIV) contributes to the NADP(+) binding site. Ser-139 is a binding site for substrate. Residue Tyr-152 is the Proton acceptor of the active site.

The protein belongs to the short-chain dehydrogenases/reductases (SDR) family.

This is an uncharacterized protein from Staphylococcus epidermidis (strain ATCC 12228 / FDA PCI 1200).